Here is a 304-residue protein sequence, read N- to C-terminus: Uricase (304 aa).

The residue at position 2 (Ala-2) is an N-acetylalanine. N6-acetyllysine; alternate occurs at positions 10 and 23. Residues Lys-10 and Lys-23 each carry the N6-succinyllysine; alternate modification. Residue Lys-23 is the Charge relay system of the active site. An N6-acetyllysine mark is found at Lys-27 and Lys-36. Ser-39 and Ser-63 each carry phosphoserine. Thr-68 serves as the catalytic Charge relay system. Urate-binding residues include Thr-68 and Asp-69. An N6-acetyllysine mark is found at Lys-118, Lys-122, and Lys-164. Position 170 (Phe-170) interacts with urate. N6-acetyllysine is present on residues Lys-175 and Lys-185. Residue Arg-187 participates in urate binding. N6-acetyllysine; alternate occurs at positions 221 and 228. An N6-succinyllysine; alternate mark is found at Lys-221 and Lys-228. At Ser-232 the chain carries Phosphoserine. Positions 235, 236, and 262 each coordinate urate. The active-site Charge relay system is His-264. An N6-acetyllysine modification is found at Lys-278. Position 289 is a phosphotyrosine (Tyr-289). The Microbody targeting signal motif lies at 302–304; it reads SRL.

Belongs to the uricase family. As to quaternary structure, homotetramer.

It localises to the peroxisome. The catalysed reaction is urate + O2 + H2O = 5-hydroxyisourate + H2O2. Its pathway is purine metabolism; urate degradation; (S)-allantoin from urate: step 1/3. Catalyzes the oxidation of uric acid to 5-hydroxyisourate, which is further processed to form (S)-allantoin. The protein is Uricase (UOX) of Bos taurus (Bovine).